The chain runs to 75 residues: Lividin-3 (75 aa).

Positions 1 to 22 (MFTLKKSLLLLFFLGTISLSLC) are cleaved as a signal peptide. The propeptide occupies 23–40 (EEERDADEDEGEMTEEEV). Cysteines 69 and 75 form a disulfide.

Expressed by the skin glands.

It localises to the secreted. Its function is as follows. Antimicrobial peptide. The sequence is that of Lividin-3 from Odorrana livida (Green mountain frog).